The primary structure comprises 663 residues: Transketolase 2 (663 aa).

Histidine 25 contacts substrate. Thiamine diphosphate-binding positions include histidine 65 and 113-115 (GPL). Aspartate 154 lines the Mg(2+) pocket. The thiamine diphosphate site is built by glycine 155 and asparagine 184. Residues asparagine 184 and isoleucine 186 each coordinate Mg(2+). Substrate contacts are provided by histidine 259, arginine 356, and serine 383. Histidine 259 contacts thiamine diphosphate. Glutamate 410 acts as the Proton donor in catalysis. Residue phenylalanine 436 coordinates thiamine diphosphate. Histidine 460, aspartate 468, and arginine 519 together coordinate substrate.

This sequence belongs to the transketolase family. As to quaternary structure, homodimer. It depends on Mg(2+) as a cofactor. Ca(2+) is required as a cofactor. The cofactor is Mn(2+). Co(2+) serves as cofactor. Requires thiamine diphosphate as cofactor.

It carries out the reaction D-sedoheptulose 7-phosphate + D-glyceraldehyde 3-phosphate = aldehydo-D-ribose 5-phosphate + D-xylulose 5-phosphate. In terms of biological role, catalyzes the transfer of a two-carbon ketol group from a ketose donor to an aldose acceptor, via a covalent intermediate with the cofactor thiamine pyrophosphate. This chain is Transketolase 2 (tkt2), found in Vibrio vulnificus (strain CMCP6).